A 159-amino-acid polypeptide reads, in one-letter code: Transcriptional repressor NrdR (159 aa).

Residues 1–21 (MRCPKCQHNKSNVIDSRQAED) are disordered. The segment at 3-34 (CPKCQHNKSNVIDSRQAEDGNTIRRRRECDAC) is a zinc-finger region. An ATP-cone domain is found at 49 to 139 (LLVVKKDGTR…VYRSFKDVDE (91 aa)).

This sequence belongs to the NrdR family. Zn(2+) serves as cofactor.

Functionally, negatively regulates transcription of bacterial ribonucleotide reductase nrd genes and operons by binding to NrdR-boxes. This Streptococcus thermophilus (strain ATCC BAA-491 / LMD-9) protein is Transcriptional repressor NrdR.